Consider the following 639-residue polypeptide: Zinc finger protein ZIC 5 (639 aa).

Disordered stretches follow at residues 113–171 (PCGG…GHSR), 189–251 (HGAP…GHPH), 323–355 (PGPHLQHHAPPPAPPPPPAPAQHPHQHHPHLPG), and 379–409 (PDELAGLPPPPPPPPPPPPPPPAGGAKPCSK). Residues 124–150 (SAPPPPAPPLPPTPSPPPPPPPPPPPA) show a composition bias toward pro residues. Composition is skewed to pro residues over residues 331–343 (APPPAPPPPPAPA) and 385–401 (LPPPPPPPPPPPPPPPA). The C2H2-type 1; atypical zinc finger occupies 434–461 (HVCFWEDCPREGKPFKAKYKLINHIRVH). 3 C2H2-type zinc fingers span residues 467–491 (FPCPFPGCGKVFARSENLKIHKRTH), 497–521 (FKCEFDGCDRKFANSSDRKKHSHVH), and 527–551 (YYCKIRGCDKSYTHPSSLRKHMKIH). The segment at 548–568 (MKIHCKSPPPSPGPLGYSSVG) is disordered. Residues serine 554, serine 558, and serine 576 each carry the phosphoserine modification. The interval 607–639 (APSHLHTPSSNGTTSETEDEEIYGNPEVVRTIH) is disordered. The span at 612-621 (HTPSSNGTTS) shows a compositional bias: polar residues.

This sequence belongs to the GLI C2H2-type zinc-finger protein family.

The protein resides in the nucleus. In terms of biological role, essential for neural crest development, converting cells from an epidermal fate to a neural crest cell fate. Binds to DNA. The polypeptide is Zinc finger protein ZIC 5 (ZIC5) (Homo sapiens (Human)).